A 75-amino-acid polypeptide reads, in one-letter code: Beta-defensin 42 (75 aa).

An N-terminal signal peptide occupies residues 1–21 (MNLRLSCLLFILVTSLPAGRC). Cystine bridges form between Cys33–Cys60, Cys40–Cys54, and Cys44–Cys61.

It belongs to the beta-defensin family. In terms of tissue distribution, epididymis-specific, with highest levels in the initial segment and distal caput.

The protein resides in the secreted. Its function is as follows. Has bactericidal activity. May play a role in the antimicrobial protection of sperm and urogenital tract epithelia. The chain is Beta-defensin 42 from Mus musculus (Mouse).